We begin with the raw amino-acid sequence, 210 residues long: Large ribosomal subunit protein uL3 (210 aa).

Positions 131 to 154 (GPMSHGSKYHRRVGSMGATTDPGR) are disordered.

The protein belongs to the universal ribosomal protein uL3 family. As to quaternary structure, part of the 50S ribosomal subunit. Forms a cluster with proteins L14 and L19.

One of the primary rRNA binding proteins, it binds directly near the 3'-end of the 23S rRNA, where it nucleates assembly of the 50S subunit. The sequence is that of Large ribosomal subunit protein uL3 from Thermoanaerobacter pseudethanolicus (strain ATCC 33223 / 39E) (Clostridium thermohydrosulfuricum).